The sequence spans 243 residues: Benzil reductase ((S)-benzoin forming) (243 aa).

NADP(+)-binding residues include Ile6, Asn80, Tyr147, Lys151, and Thr184. Tyr147 serves as the catalytic Proton acceptor.

Belongs to the short-chain dehydrogenases/reductases (SDR) family.

The protein resides in the cytoplasm. It carries out the reaction (S)-benzoin + NADP(+) = benzil + NADPH + H(+). Functionally, reduces benzil stereospecifically to (S)-benzoin. This chain is Benzil reductase ((S)-benzoin forming) (yueD), found in Bacillus subtilis (strain 168).